A 335-amino-acid polypeptide reads, in one-letter code: Glyceraldehyde-3-phosphate dehydrogenase, cytosolic (335 aa).

Residues 13–14 (RI), Asp-35, and Arg-80 each bind NAD(+). D-glyceraldehyde 3-phosphate contacts are provided by residues 151–153 (SCT), Thr-182, 211–212 (TG), and Arg-234. Cys-152 (nucleophile) is an active-site residue. Residue Asn-316 coordinates NAD(+).

Belongs to the glyceraldehyde-3-phosphate dehydrogenase family. As to quaternary structure, homotetramer.

The protein resides in the cytoplasm. It carries out the reaction D-glyceraldehyde 3-phosphate + phosphate + NAD(+) = (2R)-3-phospho-glyceroyl phosphate + NADH + H(+). It functions in the pathway carbohydrate degradation; glycolysis; pyruvate from D-glyceraldehyde 3-phosphate: step 1/5. The chain is Glyceraldehyde-3-phosphate dehydrogenase, cytosolic (GAPC) from Gracilaria gracilis (Red alga).